The following is a 313-amino-acid chain: Proclavaminate amidinohydrolase (313 aa).

The Mn(2+) site is built by histidine 121, aspartate 144, histidine 146, aspartate 148, aspartate 235, and aspartate 237.

Belongs to the arginase family. Homohexamer. It depends on Mn(2+) as a cofactor.

The enzyme catalyses amidinoproclavaminate + H2O = proclavaminate + urea. It functions in the pathway antibiotic biosynthesis; clavulanate biosynthesis; clavulanate from D-glyceraldehyde 3-phosphate and L-arginine: step 4/8. The sequence is that of Proclavaminate amidinohydrolase (pah) from Streptomyces clavuligerus.